Reading from the N-terminus, the 93-residue chain is Small hydrophobic protein (93 aa).

Transmembrane regions (helical) follow at residues 5 to 25 (LIIIGAAFLVGPRTFKFVLAY) and 32 to 52 (AFGPPLQIVQFMVWLIIIYFP).

It localises to the membrane. This is Small hydrophobic protein from Tupaia virus (isolate Tupaia/Thailand/-/1986) (TUPV).